Reading from the N-terminus, the 426-residue chain is Enolase (426 aa).

Gln-163 serves as a coordination point for (2R)-2-phosphoglycerate. Residue Glu-205 is the Proton donor of the active site. Residues Asp-242, Glu-285, and Asp-312 each coordinate Mg(2+). Positions 337, 366, 367, and 388 each coordinate (2R)-2-phosphoglycerate. The active-site Proton acceptor is Lys-337.

Belongs to the enolase family. Mg(2+) serves as cofactor.

It is found in the cytoplasm. The protein resides in the secreted. Its subcellular location is the cell surface. The catalysed reaction is (2R)-2-phosphoglycerate = phosphoenolpyruvate + H2O. Its pathway is carbohydrate degradation; glycolysis; pyruvate from D-glyceraldehyde 3-phosphate: step 4/5. Its function is as follows. Catalyzes the reversible conversion of 2-phosphoglycerate (2-PG) into phosphoenolpyruvate (PEP). It is essential for the degradation of carbohydrates via glycolysis. The sequence is that of Enolase from Gluconobacter oxydans (strain 621H) (Gluconobacter suboxydans).